Here is a 511-residue protein sequence, read N- to C-terminus: Putative thymidine phosphorylase 1 (511 aa).

It belongs to the thymidine/pyrimidine-nucleoside phosphorylase family. Type 2 subfamily.

It catalyses the reaction thymidine + phosphate = 2-deoxy-alpha-D-ribose 1-phosphate + thymine. The sequence is that of Putative thymidine phosphorylase 1 from Acidovorax sp. (strain JS42).